We begin with the raw amino-acid sequence, 351 residues long: Transmembrane protein 184 homolog DDB_G0279555 (351 aa).

The chain crosses the membrane as a helical span at residues 1–21; sequence MWIVAGVCSGVAILLSFYLIY. An N-linked (GlcNAc...) asparagine glycan is attached at asparagine 26. Transmembrane regions (helical) follow at residues 39–59, 73–93, 127–147, 162–182, and 206–226; these read ILIM…FVEL, YVLY…FDLV, FVLQ…VLET, YVWL…FLVL, and ILFF…FGVI. The N-linked (GlcNAc...) asparagine glycan is linked to asparagine 236. A helical transmembrane segment spans residues 241–261; it reads LQDFITCVEMVILAICHHFFF. Residues asparagine 301 and asparagine 304 are each glycosylated (N-linked (GlcNAc...) asparagine). Residues 327 to 351 are disordered; sequence HNHPTTKKKDEESNLLEPEDKDIII. Acidic residues predominate over residues 339–351; that stretch reads SNLLEPEDKDIII.

Belongs to the TMEM184 family.

It is found in the cell membrane. In terms of biological role, probable transporter. The polypeptide is Transmembrane protein 184 homolog DDB_G0279555 (tmem184C) (Dictyostelium discoideum (Social amoeba)).